The chain runs to 215 residues: Imidazole glycerol phosphate synthase subunit HisH (215 aa).

Positions 9 to 215 constitute a Glutamine amidotransferase type-1 domain; that stretch reads EVVLVDYGLG…QNFVDYCLER (207 aa). Cysteine 85 serves as the catalytic Nucleophile. Catalysis depends on residues histidine 193 and glutamate 195.

In terms of assembly, heterodimer of HisH and HisF.

The protein localises to the cytoplasm. The catalysed reaction is 5-[(5-phospho-1-deoxy-D-ribulos-1-ylimino)methylamino]-1-(5-phospho-beta-D-ribosyl)imidazole-4-carboxamide + L-glutamine = D-erythro-1-(imidazol-4-yl)glycerol 3-phosphate + 5-amino-1-(5-phospho-beta-D-ribosyl)imidazole-4-carboxamide + L-glutamate + H(+). It carries out the reaction L-glutamine + H2O = L-glutamate + NH4(+). It functions in the pathway amino-acid biosynthesis; L-histidine biosynthesis; L-histidine from 5-phospho-alpha-D-ribose 1-diphosphate: step 5/9. Its function is as follows. IGPS catalyzes the conversion of PRFAR and glutamine to IGP, AICAR and glutamate. The HisH subunit catalyzes the hydrolysis of glutamine to glutamate and ammonia as part of the synthesis of IGP and AICAR. The resulting ammonia molecule is channeled to the active site of HisF. This is Imidazole glycerol phosphate synthase subunit HisH from Natronomonas pharaonis (strain ATCC 35678 / DSM 2160 / CIP 103997 / JCM 8858 / NBRC 14720 / NCIMB 2260 / Gabara) (Halobacterium pharaonis).